The sequence spans 424 residues: Phosphomethylpyrimidine synthase (424 aa).

Residues N66, M95, Y124, H163, 185 to 187, 226 to 229, and E265 each bind substrate; these read SRG and DGMR. H269 provides a ligand contact to Zn(2+). F292 provides a ligand contact to substrate. A Zn(2+)-binding site is contributed by H333. Residues C408, C411, and C415 each coordinate [4Fe-4S] cluster.

Belongs to the ThiC family. [4Fe-4S] cluster is required as a cofactor.

It catalyses the reaction 5-amino-1-(5-phospho-beta-D-ribosyl)imidazole + S-adenosyl-L-methionine = 4-amino-2-methyl-5-(phosphooxymethyl)pyrimidine + CO + 5'-deoxyadenosine + formate + L-methionine + 3 H(+). Its pathway is cofactor biosynthesis; thiamine diphosphate biosynthesis. Catalyzes the synthesis of the hydroxymethylpyrimidine phosphate (HMP-P) moiety of thiamine from aminoimidazole ribotide (AIR) in a radical S-adenosyl-L-methionine (SAM)-dependent reaction. The sequence is that of Phosphomethylpyrimidine synthase from Thermotoga neapolitana (strain ATCC 49049 / DSM 4359 / NBRC 107923 / NS-E).